Reading from the N-terminus, the 497-residue chain is Dol-P-Man:Man(7)GlcNAc(2)-PP-Dol alpha-1,6-mannosyltransferase (497 aa).

Transmembrane regions (helical) follow at residues 10-30, 71-91, 92-112, 125-145, 154-174, 178-198, and 215-235; these read FLQS…YVVM, FIGA…ISCL, GFPK…IILS, FGNQ…HFLF, ILAL…NFYP, FLIF…GPIG, and YCVG…SIMW. The N-linked (GlcNAc...) asparagine glycan is linked to N253. A run of 4 helical transmembrane segments spans residues 263-285, 292-312, 316-336, and 346-366; these read IHWY…SLLG, VPFF…LPHK, FIIS…SRIY, and LVNM…VVTF. N-linked (GlcNAc...) asparagine glycosylation is present at N435.

It belongs to the glycosyltransferase 22 family.

It is found in the endoplasmic reticulum membrane. It carries out the reaction an alpha-D-Man-(1-&gt;2)-alpha-D-Man-(1-&gt;2)-alpha-D-Man-(1-&gt;3)-[alpha-D-Man-(1-&gt;2)-alpha-D-Man-(1-&gt;3)-alpha-D-Man-(1-&gt;6)]-beta-D-Man-(1-&gt;4)-beta-D-GlcNAc-(1-&gt;4)-alpha-D-GlcNAc-diphospho-di-trans,poly-cis-dolichol + a di-trans,poly-cis-dolichyl beta-D-mannosyl phosphate = an alpha-D-Man-(1-&gt;2)-alpha-D-Man-(1-&gt;2)-alpha-D-Man-(1-&gt;3)-[alpha-D-Man-(1-&gt;2)-alpha-D-Man-(1-&gt;3)-[alpha-D-Man-(1-&gt;6)]-alpha-D-Man-(1-&gt;6)]-beta-D-Man-(1-&gt;4)-beta-D-GlcNAc-(1-&gt;4)-alpha-D-GlcNAc-diphospho-di-trans,poly-cis-dolichol + a di-trans,poly-cis-dolichyl phosphate + H(+). It participates in protein modification; protein glycosylation. In terms of biological role, mannosyltransferase that operates in the biosynthetic pathway of dolichol-linked oligosaccharides, the glycan precursors employed in protein asparagine (N)-glycosylation. The assembly of dolichol-linked oligosaccharides begins on the cytosolic side of the endoplasmic reticulum membrane and finishes in its lumen. The sequential addition of sugars to dolichol pyrophosphate produces dolichol-linked oligosaccharides containing fourteen sugars, including two GlcNAcs, nine mannoses and three glucoses. Once assembled, the oligosaccharide is transferred from the lipid to nascent proteins by oligosaccharyltransferases. In the lumen of the endoplasmic reticulum, adds the eighth mannose residue in an alpha-1,6 linkage onto Man(7)GlcNAc(2)-PP-dolichol to produce Man(8)GlcNAc(2)-PP-dolichol. This chain is Dol-P-Man:Man(7)GlcNAc(2)-PP-Dol alpha-1,6-mannosyltransferase (ALG12), found in Arabidopsis thaliana (Mouse-ear cress).